Reading from the N-terminus, the 98-residue chain is Small ribosomal subunit protein eS24 (98 aa).

This sequence belongs to the eukaryotic ribosomal protein eS24 family.

This chain is Small ribosomal subunit protein eS24 (rps2e), found in Thermoplasma acidophilum (strain ATCC 25905 / DSM 1728 / JCM 9062 / NBRC 15155 / AMRC-C165).